Consider the following 99-residue polypeptide: Large ribosomal subunit protein eL21 (99 aa).

This sequence belongs to the eukaryotic ribosomal protein eL21 family.

In Staphylothermus marinus (strain ATCC 43588 / DSM 3639 / JCM 9404 / F1), this protein is Large ribosomal subunit protein eL21.